The following is a 201-amino-acid chain: ATP-dependent Clp protease proteolytic subunit (201 aa).

Residue Ser97 is the Nucleophile of the active site. Residue His122 is part of the active site.

This sequence belongs to the peptidase S14 family. As to quaternary structure, fourteen ClpP subunits assemble into 2 heptameric rings which stack back to back to give a disk-like structure with a central cavity, resembling the structure of eukaryotic proteasomes.

It is found in the cytoplasm. It carries out the reaction Hydrolysis of proteins to small peptides in the presence of ATP and magnesium. alpha-casein is the usual test substrate. In the absence of ATP, only oligopeptides shorter than five residues are hydrolyzed (such as succinyl-Leu-Tyr-|-NHMec, and Leu-Tyr-Leu-|-Tyr-Trp, in which cleavage of the -Tyr-|-Leu- and -Tyr-|-Trp bonds also occurs).. Its function is as follows. Cleaves peptides in various proteins in a process that requires ATP hydrolysis. Has a chymotrypsin-like activity. Plays a major role in the degradation of misfolded proteins. This chain is ATP-dependent Clp protease proteolytic subunit, found in Nitratidesulfovibrio vulgaris (strain ATCC 29579 / DSM 644 / CCUG 34227 / NCIMB 8303 / VKM B-1760 / Hildenborough) (Desulfovibrio vulgaris).